The following is a 255-amino-acid chain: tRNA uridine(34) hydroxylase (255 aa).

The region spanning 125-219 (ATPDTILLDV…YLEQIPESES (95 aa)) is the Rhodanese domain. The active-site Cysteine persulfide intermediate is cysteine 179.

It belongs to the TrhO family.

It carries out the reaction uridine(34) in tRNA + AH2 + O2 = 5-hydroxyuridine(34) in tRNA + A + H2O. Functionally, catalyzes oxygen-dependent 5-hydroxyuridine (ho5U) modification at position 34 in tRNAs. This chain is tRNA uridine(34) hydroxylase, found in Nitrobacter winogradskyi (strain ATCC 25391 / DSM 10237 / CIP 104748 / NCIMB 11846 / Nb-255).